The sequence spans 147 residues: Acidic phospholipase A2 1 (147 aa).

The first 19 residues, Met1–Ala19, serve as a signal peptide directing secretion. Residues Ala20–Leu27 constitute a propeptide that is removed on maturation. 7 cysteine pairs are disulfide-bonded: Cys38/Cys99, Cys54/Cys146, Cys56/Cys72, Cys71/Cys127, Cys78/Cys120, Cys88/Cys113, and Cys106/Cys118. Tyr55, Gly57, and Gly59 together coordinate Ca(2+). His75 is a catalytic residue. Residue Asp76 coordinates Ca(2+). Asp121 is a catalytic residue.

The protein belongs to the phospholipase A2 family. Group I subfamily. D49 sub-subfamily. Ca(2+) is required as a cofactor. As to expression, expressed by the venom gland.

Its subcellular location is the secreted. It carries out the reaction a 1,2-diacyl-sn-glycero-3-phosphocholine + H2O = a 1-acyl-sn-glycero-3-phosphocholine + a fatty acid + H(+). Functionally, PLA2 catalyzes the calcium-dependent hydrolysis of the 2-acyl groups in 3-sn-phosphoglycerides. The chain is Acidic phospholipase A2 1 from Bungarus flaviceps flaviceps (Red-headed krait).